Here is a 227-residue protein sequence, read N- to C-terminus: Cytochrome c oxidase subunit 2 (227 aa).

Over 1 to 14 the chain is Mitochondrial intermembrane; sequence MAYPFQLGFQDAAS. The chain crosses the membrane as a helical span at residues 15 to 45; the sequence is PIMEELLHFHDHTLMIVFLISSLVLYIITLM. Residues 46–59 lie on the Mitochondrial matrix side of the membrane; that stretch reads LTTKLTHTSTMDAQ. Residues 60–87 traverse the membrane as a helical segment; sequence EVETVWTILPAIILILIALPSLRILYMM. Residues 88-227 are Mitochondrial intermembrane-facing; sequence DEVNNPSLTV…VFEKWSVSML (140 aa). Residues H161, C196, E198, C200, H204, and M207 each coordinate Cu cation. E198 serves as a coordination point for Mg(2+).

Belongs to the cytochrome c oxidase subunit 2 family. In terms of assembly, component of the cytochrome c oxidase (complex IV, CIV), a multisubunit enzyme composed of 14 subunits. The complex is composed of a catalytic core of 3 subunits MT-CO1, MT-CO2 and MT-CO3, encoded in the mitochondrial DNA, and 11 supernumerary subunits COX4I, COX5A, COX5B, COX6A, COX6B, COX6C, COX7A, COX7B, COX7C, COX8 and NDUFA4, which are encoded in the nuclear genome. The complex exists as a monomer or a dimer and forms supercomplexes (SCs) in the inner mitochondrial membrane with NADH-ubiquinone oxidoreductase (complex I, CI) and ubiquinol-cytochrome c oxidoreductase (cytochrome b-c1 complex, complex III, CIII), resulting in different assemblies (supercomplex SCI(1)III(2)IV(1) and megacomplex MCI(2)III(2)IV(2)). Found in a complex with TMEM177, COA6, COX18, COX20, SCO1 and SCO2. Interacts with TMEM177 in a COX20-dependent manner. Interacts with COX20. Interacts with COX16. Cu cation is required as a cofactor.

It is found in the mitochondrion inner membrane. The catalysed reaction is 4 Fe(II)-[cytochrome c] + O2 + 8 H(+)(in) = 4 Fe(III)-[cytochrome c] + 2 H2O + 4 H(+)(out). Its function is as follows. Component of the cytochrome c oxidase, the last enzyme in the mitochondrial electron transport chain which drives oxidative phosphorylation. The respiratory chain contains 3 multisubunit complexes succinate dehydrogenase (complex II, CII), ubiquinol-cytochrome c oxidoreductase (cytochrome b-c1 complex, complex III, CIII) and cytochrome c oxidase (complex IV, CIV), that cooperate to transfer electrons derived from NADH and succinate to molecular oxygen, creating an electrochemical gradient over the inner membrane that drives transmembrane transport and the ATP synthase. Cytochrome c oxidase is the component of the respiratory chain that catalyzes the reduction of oxygen to water. Electrons originating from reduced cytochrome c in the intermembrane space (IMS) are transferred via the dinuclear copper A center (CU(A)) of subunit 2 and heme A of subunit 1 to the active site in subunit 1, a binuclear center (BNC) formed by heme A3 and copper B (CU(B)). The BNC reduces molecular oxygen to 2 water molecules using 4 electrons from cytochrome c in the IMS and 4 protons from the mitochondrial matrix. This Balaenoptera physalus (Fin whale) protein is Cytochrome c oxidase subunit 2 (MT-CO2).